Consider the following 279-residue polypeptide: 4-deoxy-L-threo-5-hexosulose-uronate ketol-isomerase (279 aa).

Residues His197, His199, Glu204, and His246 each coordinate Zn(2+).

The protein belongs to the KduI family. Zn(2+) serves as cofactor.

The enzyme catalyses 5-dehydro-4-deoxy-D-glucuronate = 3-deoxy-D-glycero-2,5-hexodiulosonate. It functions in the pathway glycan metabolism; pectin degradation; 2-dehydro-3-deoxy-D-gluconate from pectin: step 4/5. Catalyzes the isomerization of 5-dehydro-4-deoxy-D-glucuronate to 3-deoxy-D-glycero-2,5-hexodiulosonate. The polypeptide is 4-deoxy-L-threo-5-hexosulose-uronate ketol-isomerase (Kineococcus radiotolerans (strain ATCC BAA-149 / DSM 14245 / SRS30216)).